The sequence spans 348 residues: MIETDRIISANTAQTNDENVIDRAIRPKTLAEYEGQPAVREQMEIFIQAAKARKDALDHTLIFGPPGLGKTTLSNIIANEMGVELKQTSGPVLEKAGDLAALLTNLEENDVLFIDEIHRLSPVVEEILYPAMEDYQLDIMIGEGPAARSIKIDLPPFTLVGATTRAGLLTSPLRDRFGIIQRLEFYSIDDLSKIVYRSAKLLNLDITTDGAMEIAKRSRGTPRIANRLLRRVRDYAQVKGSGVICFEIADKALSMLKVDPVGFDHMDHRYLLTLMEKFAGGPVGLDTMSAALSEEKGTIEDVIEPYLIQQGYIMRTARGRIATLLAYNHFKLKIPDNLSADQQQTLSI.

The segment at 4-186 is large ATPase domain (RuvB-L); sequence TDRIISANTA…FGIIQRLEFY (183 aa). Residues Ile-25, Arg-26, Gly-67, Lys-70, Thr-71, Thr-72, 133–135, Arg-176, Tyr-186, and Arg-223 each bind ATP; that span reads EDY. Thr-71 lines the Mg(2+) pocket. A small ATPAse domain (RuvB-S) region spans residues 187-257; that stretch reads SIDDLSKIVY…IADKALSMLK (71 aa). Residues 260–348 are head domain (RuvB-H); it reads PVGFDHMDHR…SADQQQTLSI (89 aa). Residues Arg-315 and Arg-320 each coordinate DNA.

The protein belongs to the RuvB family. As to quaternary structure, homohexamer. Forms an RuvA(8)-RuvB(12)-Holliday junction (HJ) complex. HJ DNA is sandwiched between 2 RuvA tetramers; dsDNA enters through RuvA and exits via RuvB. An RuvB hexamer assembles on each DNA strand where it exits the tetramer. Each RuvB hexamer is contacted by two RuvA subunits (via domain III) on 2 adjacent RuvB subunits; this complex drives branch migration. In the full resolvosome a probable DNA-RuvA(4)-RuvB(12)-RuvC(2) complex forms which resolves the HJ.

It localises to the cytoplasm. The catalysed reaction is ATP + H2O = ADP + phosphate + H(+). Functionally, the RuvA-RuvB-RuvC complex processes Holliday junction (HJ) DNA during genetic recombination and DNA repair, while the RuvA-RuvB complex plays an important role in the rescue of blocked DNA replication forks via replication fork reversal (RFR). RuvA specifically binds to HJ cruciform DNA, conferring on it an open structure. The RuvB hexamer acts as an ATP-dependent pump, pulling dsDNA into and through the RuvAB complex. RuvB forms 2 homohexamers on either side of HJ DNA bound by 1 or 2 RuvA tetramers; 4 subunits per hexamer contact DNA at a time. Coordinated motions by a converter formed by DNA-disengaged RuvB subunits stimulates ATP hydrolysis and nucleotide exchange. Immobilization of the converter enables RuvB to convert the ATP-contained energy into a lever motion, pulling 2 nucleotides of DNA out of the RuvA tetramer per ATP hydrolyzed, thus driving DNA branch migration. The RuvB motors rotate together with the DNA substrate, which together with the progressing nucleotide cycle form the mechanistic basis for DNA recombination by continuous HJ branch migration. Branch migration allows RuvC to scan DNA until it finds its consensus sequence, where it cleaves and resolves cruciform DNA. This Francisella tularensis subsp. tularensis (strain FSC 198) protein is Holliday junction branch migration complex subunit RuvB.